The following is a 180-amino-acid chain: Thebaine synthase 1 (180 aa).

Ser96 is a thebaine binding site. The active-site Proton acceptor is His111. Residue Thr127 coordinates thebaine.

This sequence belongs to the MLP family. Homodimer (allosteric) and oligomers. In terms of tissue distribution, expressed in poppy latex.

The enzyme catalyses (7S)-O-acetylsalutaridinol = thebaine + acetate + H(+). The protein operates within alkaloid biosynthesis; morphine biosynthesis. Its function is as follows. Catalyzes the formation of thebaine from (7S)-salutaridinol 7-O-acetate at the expense of labile hydroxylated by-products, which are preferentially produced by spontaneous allylic elimination. This Papaver somniferum (Opium poppy) protein is Thebaine synthase 1.